We begin with the raw amino-acid sequence, 66 residues long: Large ribosomal subunit protein eL24 (66 aa).

4 residues coordinate Zn(2+): Cys6, Cys9, Cys32, and Cys36. Residues 6-36 (CSFCGKSIEPASGFLYVRKDGSVLNFCSRKC) form a C4-type zinc finger.

The protein belongs to the eukaryotic ribosomal protein eL24 family. In terms of assembly, part of the 50S ribosomal subunit. Forms a cluster with proteins L3 and L14. The cofactor is Zn(2+).

Binds to the 23S rRNA. The sequence is that of Large ribosomal subunit protein eL24 from Picrophilus torridus (strain ATCC 700027 / DSM 9790 / JCM 10055 / NBRC 100828 / KAW 2/3).